The primary structure comprises 357 residues: UDP-xylose transporter 3 (357 aa).

10 helical membrane passes run 7 to 27, 31 to 51, 75 to 95, 100 to 120, 132 to 152, 154 to 174, 194 to 214, 224 to 244, 250 to 270, and 280 to 300; these read FQLG…SIVI, ALIS…HLLV, VMGF…SLGF, FYQM…TLFF, LTIL…LNML, SVLS…TNTI, AITL…QNVF, FFIV…FLVI, VTYQ…GYVL, and ILGI…CSIE. Ser-334 bears the Phosphoserine mark.

The protein belongs to the TPT transporter family. TPT (TC 2.A.7.9) subfamily. In terms of tissue distribution, ubiquitous.

It localises to the golgi apparatus membrane. In terms of biological role, nucleotide-sugar transporter that transports UDP-xylose and UMP in a strict counter-exchange mode. This Arabidopsis thaliana (Mouse-ear cress) protein is UDP-xylose transporter 3.